The primary structure comprises 496 residues: Histidine--tRNA ligase (496 aa).

It belongs to the class-II aminoacyl-tRNA synthetase family. As to quaternary structure, homodimer.

The protein localises to the cytoplasm. The enzyme catalyses tRNA(His) + L-histidine + ATP = L-histidyl-tRNA(His) + AMP + diphosphate + H(+). The sequence is that of Histidine--tRNA ligase from Bartonella bacilliformis (strain ATCC 35685 / KC583 / Herrer 020/F12,63).